The sequence spans 285 residues: Ribonuclease H1 (285 aa).

Residues 72–122 (RSSSSPDGSKGQESAHVQKLQVKTSKRPREPLGEEEEPPEPGAKHTRQDTE) are disordered. An RNase H type-1 domain is found at 135 to 281 (MGESVVVYTD…ADRLAREGAK (147 aa)). Residues Asp144, Glu185, Asp209, and Asp273 each contribute to the Mg(2+) site.

This sequence belongs to the RNase H family. As to quaternary structure, monomer. Mg(2+) serves as cofactor.

The protein localises to the cytoplasm. It carries out the reaction Endonucleolytic cleavage to 5'-phosphomonoester.. In the presence of magnesium, manganese is inhibitory. Functionally, endonuclease that specifically degrades the RNA of RNA-DNA hybrids. Plays a role in RNA polymerase II (RNAp II) transcription termination by degrading R-loop RNA-DNA hybrid formation at G-rich pause sites located downstream of the poly(A) site and behind the elongating RNAp II. The protein is Ribonuclease H1 (Rnaseh1) of Rattus norvegicus (Rat).